Reading from the N-terminus, the 267-residue chain is Chlorophyll a-b binding protein 3B, chloroplastic (267 aa).

Residues 1 to 34 constitute a chloroplast transit peptide; sequence MAASTMALSSSTFAGKAVKLSPSSSEISGNGRIT. Residues 19–52 form a disordered region; sequence KLSPSSSEISGNGRITMRKTAAKPKPASSGSPWX. A helical transmembrane segment spans residues 153–173; that stretch reads LVHAQSILAIWACQVVLMGAV. Residues Val154, Ser158, Gln166, Glu174, Arg177, and Leu183 each coordinate chlorophyll b. Chlorophyll a is bound by residues Lys214, Glu215, Asn218, Arg220, Gln232, His247, and Ala256. Residues 221–241 form a helical membrane-spanning segment; sequence LAMFSMFGFFVQAIVTGKGPL. A chlorophyll b-binding site is contributed by Phe263.

It belongs to the light-harvesting chlorophyll a/b-binding (LHC) protein family. In terms of assembly, the LHC complex consists of chlorophyll a-b binding proteins. Requires Binds at least 14 chlorophylls (8 Chl-a and 6 Chl-b) and carotenoids such as lutein and neoxanthin. as cofactor. Photoregulated by reversible phosphorylation of its threonine residues.

It localises to the plastid. The protein resides in the chloroplast thylakoid membrane. In terms of biological role, the light-harvesting complex (LHC) functions as a light receptor, it captures and delivers excitation energy to photosystems with which it is closely associated. This is Chlorophyll a-b binding protein 3B, chloroplastic (CAB3B) from Solanum lycopersicum (Tomato).